A 440-amino-acid chain; its full sequence is Glyceraldehyde-3-phosphate dehydrogenase, testis-specific (440 aa).

The tract at residues 1–105 (MSRRDVVLTN…PPPPPLQKPA (105 aa)) is testis-specific N-terminal extension. Pro residues-rich tracts occupy residues 40 to 75 (PPKLEDPPPTVEEQPPPPPPPPPPPPPPPPPPPPQI) and 83 to 102 (APPPPPPPPPPPPPPPPPLQ). The interval 40-106 (PPKLEDPPPT…PPPPLQKPAR (67 aa)) is disordered. NAD(+) is bound by residues 117-118 (RI), Asp138, Lys183, Tyr205, and Thr225. D-glyceraldehyde 3-phosphate contacts are provided by residues 255–257 (SCT), Thr286, 315–316 (TG), and Arg338. Cys256 functions as the Nucleophile in the catalytic mechanism. A Phosphoserine modification is found at Ser358. An NAD(+)-binding site is contributed by Asn420.

It belongs to the glyceraldehyde-3-phosphate dehydrogenase family. In terms of assembly, homotetramer. In terms of tissue distribution, testis specific.

Its subcellular location is the cytoplasm. It carries out the reaction D-glyceraldehyde 3-phosphate + phosphate + NAD(+) = (2R)-3-phospho-glyceroyl phosphate + NADH + H(+). The protein operates within carbohydrate degradation; glycolysis; pyruvate from D-glyceraldehyde 3-phosphate: step 1/5. Its function is as follows. May play an important role in regulating the switch between different pathways for energy production during spermiogenesis and in the spermatozoon. Required for sperm motility and male fertility. This Mus musculus (Mouse) protein is Glyceraldehyde-3-phosphate dehydrogenase, testis-specific (Gapdhs).